The chain runs to 35 residues: Mu-theraphotoxin-Ca2a (35 aa).

Cystine bridges form between Cys-2–Cys-17, Cys-9–Cys-24, and Cys-16–Cys-31.

The protein belongs to the neurotoxin 10 (Hwtx-1) family. 10 (haplotoxin-1) subfamily. As to expression, expressed by the venom gland.

The protein localises to the secreted. In terms of biological role, potently inhibits Nav1.7/SCN9A (IC(50)=98.1 nM), and moderately inhibits Nav1.2/SCN2A (IC(50)=216.3 nM), Nav1.6/SCN8A (IC(50)=313.6 nM), and Nav1.3/SCN3A (IC(50)=491.3 nM). Hyperpolarizes the slow inactivation, but does not alter the voltage-dependent activation or fast inactivation of Nav1.7/SCN9A. Binds with Nav1.7/SCN9A at the extracellular S3-S4 linker of domain II (site 4). In vivo, exhibits dose-dependent analgesic efficacy by reducing pain responses in rodent models of formalin-induced paw licking, hot plate test, and acetic acid-induced writhing. The protein is Mu-theraphotoxin-Ca2a of Cyriopagopus albostriatus (Cambodian tiger tarantula).